A 385-amino-acid polypeptide reads, in one-letter code: MKQIKVISIFGTRPEAIKMAPLVRRLNENKNVESKVCVTAQHRQMLDQVLNLFDINPDFDLNIMKTKQTLTGITARVLEGLDKIFADENPDIVLVHGDTTTTFAAALAAFYKKIAVGHVEAGLRTYNKYFPFPEEMNRKLTGAVADLHFAPTLGSKKNLLREAVNEKNIFITGNTVVDAMNHTVEKDYVFENDELNKLDYKNKKVIMVTAHRRENWGKGIENICTALRRIAEENEDVEIVYLVHLNPVVKDVVYNNLNGMKGVHLLPPLDTKETHNLMNKCFMVMTDSGGLQEEAPHLGKPVLVLRDVTERPEAVEAGTVKLVGTDIKKIVDEAYKIMKDEEEYEKMSKAINPYGDGKASDRIVDAILYHFGVLKDRPDEFSPKK.

It belongs to the UDP-N-acetylglucosamine 2-epimerase family.

The protein resides in the cytoplasm. The enzyme catalyses UDP-N-acetyl-alpha-D-glucosamine = UDP-N-acetyl-alpha-D-mannosamine. The polypeptide is Putative UDP-N-acetylglucosamine 2-epimerase (Clostridium acetobutylicum (strain ATCC 824 / DSM 792 / JCM 1419 / IAM 19013 / LMG 5710 / NBRC 13948 / NRRL B-527 / VKM B-1787 / 2291 / W)).